A 461-amino-acid chain; its full sequence is ATP-dependent protease ATPase subunit HslU (461 aa).

ATP-binding positions include Val21, 63-68 (GVGKTE), Asp274, Glu339, and Arg411.

Belongs to the ClpX chaperone family. HslU subfamily. A double ring-shaped homohexamer of HslV is capped on each side by a ring-shaped HslU homohexamer. The assembly of the HslU/HslV complex is dependent on binding of ATP.

The protein resides in the cytoplasm. In terms of biological role, ATPase subunit of a proteasome-like degradation complex; this subunit has chaperone activity. The binding of ATP and its subsequent hydrolysis by HslU are essential for unfolding of protein substrates subsequently hydrolyzed by HslV. HslU recognizes the N-terminal part of its protein substrates and unfolds these before they are guided to HslV for hydrolysis. In Caldanaerobacter subterraneus subsp. tengcongensis (strain DSM 15242 / JCM 11007 / NBRC 100824 / MB4) (Thermoanaerobacter tengcongensis), this protein is ATP-dependent protease ATPase subunit HslU.